Here is a 437-residue protein sequence, read N- to C-terminus: Bystin (437 aa).

The disordered stretch occupies residues Met1–Trp105. Arg40 is subject to Omega-N-methylarginine. Position 55 is a phosphoserine (Ser55). Residues Ala71–Thr87 are compositionally biased toward basic and acidic residues. The residue at position 98 (Ser98) is a Phosphoserine. Thr156 is subject to Phosphothreonine. Residues Ser167 and Ser414 each carry the phosphoserine modification.

This sequence belongs to the bystin family. Binds trophinin, tastin and cytokeratins. As to expression, found in the placenta from the sixth week of pregnancy. Was localized in the cytoplasm of the syncytiotrophoblast in the chorionic villi and in endometrial decidual cells at the uteroplacental interface. After week 10, the level decreased and then disappeared from placental villi.

It localises to the cytoplasm. The protein resides in the nucleus. The protein localises to the nucleolus. Its function is as follows. Required for processing of 20S pre-rRNA precursor and biogenesis of 40S ribosomal subunits. May be required for trophinin-dependent regulation of cell adhesion during implantation of human embryos. This chain is Bystin, found in Homo sapiens (Human).